Consider the following 299-residue polypeptide: Lysine exporter LysO (299 aa).

A run of 8 helical transmembrane segments spans residues 1–21 (MFSGLLIILVPLIVGYLIPLR), 31–51 (QLLSWMVYLILFFMGISLAFL), 58–78 (LLAILHYSAVSITVILLCNIA), 109–129 (LKLCGVVVIGFAIGLSGLAFL), 131–151 (HATEASEYTLILLLFLVGIQL), 169–189 (IVAVVVVVSSLIGGLINAFIL), 207–227 (SLSGILLTESFGPVIGSAAFF), and 277–297 (PAAIVHGFILSLLVPILIAFF).

The protein belongs to the LysO family.

Its subcellular location is the cell inner membrane. In terms of biological role, mediates export of lysine. This chain is Lysine exporter LysO, found in Escherichia coli (strain K12).